The sequence spans 239 residues: dITP/XTP pyrophosphatase (239 aa).

7 to 12 (THNEGK) lines the substrate pocket. Aspartate 74 serves as the catalytic Proton acceptor. Aspartate 74 contacts Mg(2+). Substrate is bound by residues serine 75, 182 to 185 (FGYD), lysine 214, and 219 to 220 (HR).

Belongs to the HAM1 NTPase family. In terms of assembly, homodimer. It depends on Mg(2+) as a cofactor.

It catalyses the reaction XTP + H2O = XMP + diphosphate + H(+). The enzyme catalyses dITP + H2O = dIMP + diphosphate + H(+). The catalysed reaction is ITP + H2O = IMP + diphosphate + H(+). Its function is as follows. Pyrophosphatase that catalyzes the hydrolysis of nucleoside triphosphates to their monophosphate derivatives, with a high preference for the non-canonical purine nucleotides XTP (xanthosine triphosphate), dITP (deoxyinosine triphosphate) and ITP. Seems to function as a house-cleaning enzyme that removes non-canonical purine nucleotides from the nucleotide pool, thus preventing their incorporation into DNA/RNA and avoiding chromosomal lesions. The chain is dITP/XTP pyrophosphatase from Bifidobacterium animalis subsp. lactis (strain AD011).